Reading from the N-terminus, the 80-residue chain is WAP four-disulfide core domain protein 15A (80 aa).

Positions 1–20 (MKPSSLLLFTTTILLCLSMA) are cleaved as a signal peptide. Residues 29 to 76 (VTPKQGYCPEFLLDCPFVLLPVCSRDKGCKGTKKCCFYYCQMRCVEPW) form the WAP domain. Cystine bridges form between Cys-36/Cys-64, Cys-43/Cys-68, Cys-51/Cys-63, and Cys-57/Cys-72.

The protein localises to the secreted. Antibacterial protein. The polypeptide is WAP four-disulfide core domain protein 15A (Mus musculus (Mouse)).